Reading from the N-terminus, the 384-residue chain is Odorant receptor 46a, isoform B (384 aa).

The Cytoplasmic segment spans residues 1–37 (MVTEDFYKYQVWYFQILGVWQLPTWAADHQRRFQSMR). A helical transmembrane segment spans residues 38–58 (FGFILVILFIMLLLFSFEMLN). N59 is a glycosylation site (N-linked (GlcNAc...) asparagine). Residues 59 to 65 (NISQVRE) are Extracellular-facing. Residues 66-86 (ILKVFFMFATEISCMAKLLHL) form a helical membrane-spanning segment. Residues 87–130 (KLKSRKLAGLVDAMLSPEFGVKSEQEMQMLELDRVAVVRMRNSY) lie on the Cytoplasmic side of the membrane. Residues 131–151 (GIMSLGAASLILIVPCFDNFG) traverse the membrane as a helical segment. Over 152 to 165 (ELPLAMLEVCSIEG) the chain is Extracellular. A helical transmembrane segment spans residues 166–186 (WICYWSQYLFHSICLLPTCVL). Residues 187 to 247 (NITYDSVAYS…YNRIVRFKDL (61 aa)) are Cytoplasmic-facing. The chain crosses the membrane as a helical span at residues 248–268 (VELFIKGPGSVQLMCSVLVLV). Residues 269-283 (SNLYDMSTMSIANGD) lie on the Extracellular side of the membrane. The chain crosses the membrane as a helical span at residues 284-304 (AIFMLKTCIYQLVMLWQIFII). Over 305–348 (CYASNEVTVQSSRLCHSIYSSQWTGWNRANRRIVLLMMQRFNSP) the chain is Cytoplasmic. The helical transmembrane segment at 349–369 (MLLSTFNPTFAFSLEAFGSIV) threads the bilayer. N370 carries N-linked (GlcNAc...) asparagine glycosylation. Residues 370-384 (NCSYSYFALLKRVNS) lie on the Extracellular side of the membrane.

It belongs to the insect chemoreceptor superfamily. Heteromeric odorant receptor channel (TC 1.A.69) family. Or2a subfamily. In terms of assembly, interacts with Orco. Complexes exist early in the endomembrane system in olfactory sensory neurons (OSNs), coupling these complexes to the conserved ciliary trafficking pathway. As to expression, isoform B is expressed in the antenna.

It localises to the cell membrane. Its function is as follows. Odorant receptor which mediates acceptance or avoidance behavior, depending on its substrates. The odorant receptor repertoire encodes a large collection of odor stimuli that vary widely in identity, intensity, and duration. May form a complex with Orco to form odorant-sensing units, providing sensitive and prolonged odorant signaling and calcium permeability. The chain is Odorant receptor 46a, isoform B (Or46a) from Drosophila melanogaster (Fruit fly).